Reading from the N-terminus, the 606-residue chain is Probable methyltransferase PMT5 (606 aa).

The Cytoplasmic segment spans residues 1 to 20; sequence MRGSWYKSVSSVFGLRPRIR. A helical; Signal-anchor for type II membrane protein membrane pass occupies residues 21 to 41; it reads GLLFFIVGVVALVTILAPLTS. At 42–606 the chain is on the lumenal side; the sequence is NSYDSSSSST…LVCQKPFIKK (565 aa). Residues Asn101 and Asn409 are each glycosylated (N-linked (GlcNAc...) asparagine).

The protein belongs to the methyltransferase superfamily.

Its subcellular location is the endoplasmic reticulum membrane. The chain is Probable methyltransferase PMT5 from Arabidopsis thaliana (Mouse-ear cress).